The sequence spans 621 residues: Signal recognition particle receptor subunit alpha homolog (621 aa).

Residues 1–158 (MFDQLAVFTP…KKFEQYFRIK (158 aa)) are SRX. Residues 167 to 217 (HINPDNFTKNGSVPQSHNKNTKKKLRDTKGKKQSTGNVGSGRKWGRDGGML) form a disordered region. Residues 171-183 (DNFTKNGSVPQSH) are compositionally biased toward polar residues. Basic residues predominate over residues 185 to 198 (KNTKKKLRDTKGKK). Ser239 carries the post-translational modification Phosphoserine. Residues 398-620 (YVFSIVGVNG…SVKWAVNTLM (223 aa)) form an NG domain region. GTP contacts are provided by residues 404–411 (GVNGVGKS) and 510–514 (DTAGR). Ser523 bears the Phosphoserine mark. Residue 572–575 (SKCD) coordinates GTP.

Belongs to the GTP-binding SRP family. As to quaternary structure, heterodimer of an alpha and a beta chain.

The protein localises to the endoplasmic reticulum membrane. Functionally, component of the SRP (signal recognition particle) receptor (SR). Ensures, in conjunction with the signal recognition particle, the correct targeting of the nascent secretory proteins to the endoplasmic reticulum membrane system. GTP hydrolysis may enhance the fidelity of and provide unidirectionality to the targeting reaction. It is important but not essential for cell growth. May be directly involved in mitochondrial protein import. The protein is Signal recognition particle receptor subunit alpha homolog (SRP101) of Saccharomyces cerevisiae (strain ATCC 204508 / S288c) (Baker's yeast).